An 80-amino-acid chain; its full sequence is Large ribosomal subunit protein bL31B (80 aa).

This sequence belongs to the bacterial ribosomal protein bL31 family. Type B subfamily. In terms of assembly, part of the 50S ribosomal subunit.

The chain is Large ribosomal subunit protein bL31B from Streptococcus mutans serotype c (strain ATCC 700610 / UA159).